The primary structure comprises 379 residues: Gap junction alpha-1 protein (379 aa).

Topologically, residues 2 to 23 (GDWSALGRLLDKVQAYSTAGGK) are cytoplasmic. The chain crosses the membrane as a helical span at residues 24 to 44 (VWLSVLFIFRILLLGTAVESA). The Extracellular segment spans residues 45–76 (WGDEQSAFVCNTQQPGCENVCYDKSFPISHVR). Intrachain disulfides connect Cys54–Cys192 and Cys187–Cys198. A helical membrane pass occupies residues 77 to 97 (FWVLQIIFVSTPTLLYLAHVF). The Cytoplasmic portion of the chain corresponds to 98-163 (YLMRKEEKLN…TYIISILFKS (66 aa)). Residues 164–184 (VFEVGFIIIQWYMYGFSLSAI) traverse the membrane as a helical segment. Residues 185 to 207 (YTCKRDPCPHQVDCFLSRPTEKT) lie on the Extracellular side of the membrane. Residues 208 to 228 (IFIWFMLIVSIVSLALNIIEL) traverse the membrane as a helical segment. Residues 229-379 (FYVTYKSIKD…SRPRPDDLEI (151 aa)) lie on the Cytoplasmic side of the membrane. The tract at residues 322 to 379 (STISNTHAQPFDFSDEHQNTKKMAPGHEMQPLTILDQRPSSRASSHASSRPRPDDLEI) is disordered. Residues 359–371 (RPSSRASSHASSR) are compositionally biased toward low complexity.

It belongs to the connexin family. Alpha-type (group II) subfamily. As to quaternary structure, a connexon is composed of a hexamer of connexins. Interacts with TMEM65. Expressed in most tissues. Highest levels found in eye and brain.

It localises to the cell membrane. Its subcellular location is the cell junction. The protein localises to the gap junction. In terms of biological role, one gap junction consists of a cluster of closely packed pairs of transmembrane channels, the connexons, through which materials of low MW diffuse from one cell to a neighboring cell. Plays an essential role in gap junction communication in the ventricles. This is Gap junction alpha-1 protein (gja1) from Xenopus laevis (African clawed frog).